The following is a 2483-amino-acid chain: Cation-independent mannose-6-phosphate receptor (2483 aa).

The signal sequence occupies residues Met-1–Ala-35. At Gln-36–Ala-2295 the chain is on the lumenal side. MRH domains are found at residues Ala-42 to Lys-158, Val-167 to Arg-315, Glu-321 to Lys-463, Leu-468 to Leu-613, Glu-619 to Glu-755, Leu-758 to Ile-917, Gln-925 to Pro-1072, Val-1075 to Val-1212, and Asp-1218 to Pro-1356. Disulfide bonds link Cys-44–Cys-64 and Cys-72–Cys-79. An N-linked (GlcNAc...) asparagine glycan is attached at Asn-107. 8 cysteine pairs are disulfide-bonded: Cys-112/Cys-144, Cys-129/Cys-156, Cys-169/Cys-207, Cys-223/Cys-230, Cys-270/Cys-301, Cys-283/Cys-313, Cys-323/Cys-361, and Cys-369/Cys-377. Asn-395 and Asn-430 each carry an N-linked (GlcNAc...) asparagine glycan. Disulfide bonds link Cys-415-Cys-449, Cys-429-Cys-461, Cys-470-Cys-513, and Cys-525-Cys-532. N-linked (GlcNAc...) asparagine glycans are attached at residues Asn-537 and Asn-575. Intrachain disulfides connect Cys-566–Cys-599 and Cys-580–Cys-611. Asn-620 is a glycosylation site (N-linked (GlcNAc...) asparagine). 5 disulfides stabilise this stretch: Cys-621–Cys-658, Cys-666–Cys-673, Cys-724–Cys-753, Cys-760–Cys-807, and Cys-816–Cys-823. N-linked (GlcNAc...) asparagine glycosylation occurs at Asn-740. A glycan (N-linked (GlcNAc...) asparagine) is linked at Asn-864. Intrachain disulfides connect Cys-868/Cys-903, Cys-886/Cys-915, Cys-927/Cys-964, Cys-970/Cys-981, Cys-1035/Cys-1070, Cys-1077/Cys-1118, and Cys-1127/Cys-1135. Asn-944 carries N-linked (GlcNAc...) asparagine glycosylation. Residue Asn-1157 is glycosylated (N-linked (GlcNAc...) asparagine). 4 disulfides stabilise this stretch: Cys-1170–Cys-1198, Cys-1183–Cys-1210, Cys-1220–Cys-1255, and Cys-1263–Cys-1275. Asn-1239 carries N-linked (GlcNAc...) asparagine glycosylation. An N-linked (GlcNAc...) asparagine glycan is attached at Asn-1305. 2 disulfides stabilise this stretch: Cys-1312/Cys-1342 and Cys-1326/Cys-1354. An N-linked (GlcNAc...) asparagine glycan is attached at Asn-1358. MRH domains follow at residues Thr-1360 to Val-1501, Asp-1507 to Gln-1641, Thr-1643 to Asp-1790, Gln-1795 to Pro-1982, Met-1985 to Val-2120, and Val-2128 to Leu-2273. Intrachain disulfides connect Cys-1362–Cys-1401 and Cys-1413–Cys-1420. The N-linked (GlcNAc...) asparagine glycan is linked to Asn-1423. Cystine bridges form between Cys-1454/Cys-1487, Cys-1469/Cys-1499, Cys-1509/Cys-1546, Cys-1552/Cys-1559, Cys-1591/Cys-1627, Cys-1607/Cys-1639, Cys-1645/Cys-1688, Cys-1699/Cys-1706, Cys-1743/Cys-1776, Cys-1759/Cys-1788, Cys-1797/Cys-1832, Cys-1843/Cys-1849, Cys-1886/Cys-1968, Cys-1896/Cys-1920, Cys-1910/Cys-1935, Cys-1950/Cys-1980, Cys-1987/Cys-2022, Cys-2032/Cys-2039, Cys-2075/Cys-2106, and Cys-2089/Cys-2118. A glycan (N-linked (GlcNAc...) asparagine) is linked at Asn-1532. An N-linked (GlcNAc...) asparagine glycan is attached at Asn-1649. Asn-1750 carries an N-linked (GlcNAc...) asparagine glycan. Asn-1809 is a glycosylation site (N-linked (GlcNAc...) asparagine). The Fibronectin type-II domain occupies Asp-1891–Gln-1937. A glycan (N-linked (GlcNAc...) asparagine) is linked at Asn-2078. Asn-2129 is a glycosylation site (N-linked (GlcNAc...) asparagine). Cystine bridges form between Cys-2181/Cys-2187, Cys-2225/Cys-2259, and Cys-2241/Cys-2271. Residues Val-2296–Leu-2316 form a helical membrane-spanning segment. The Cytoplasmic portion of the chain corresponds to His-2317 to Ile-2483. An N6-acetyllysine modification is found at Lys-2342. Ser-2401 carries the phosphoserine modification. Residues Ser-2415–Ile-2483 are disordered. Residue Arg-2417 is modified to Omega-N-methylarginine. Composition is skewed to basic and acidic residues over residues Val-2434 to Ala-2451 and Ser-2471 to Ile-2483. Residues Ser-2471 and Ser-2476 each carry the phosphoserine modification.

Belongs to the MRL1/IGF2R family. In terms of assembly, binds HA-I and HA-II plasma membrane adapters. Interacts with DPP4; the interaction is direct. Binds GGA1, GGA2 and GGA3. Interacts with the heterotrimeric retromer cargo-selective complex (CSC), formed by VPS26 (VPS26A or VPS26B), VPS29 and VPS35; which is involved in retrograde trafficking of the receptor from endosomes to the Golgi apparatus. Post-translationally, palmitoylated. Undergoes cysteine S-palmitoylation which promotes interaction with the retromer cargo-selective complex which mediates its retrograde trafficking to the Golgi apparatus.

Its subcellular location is the golgi apparatus membrane. The protein localises to the endosome membrane. Its function is as follows. Mediates the transport of phosphorylated lysosomal enzymes from the Golgi complex and the cell surface to lysosomes. Lysosomal enzymes bearing phosphomannosyl residues bind specifically to mannose-6-phosphate receptors in the Golgi apparatus and the resulting receptor-ligand complex is transported to an acidic prelysosomal compartment where the low pH mediates the dissociation of the complex. The receptor is then recycled back to the Golgi for another round of trafficking through its binding to the retromer. This receptor also binds IGF2. Acts as a positive regulator of T-cell coactivation by binding DPP4. This is Cation-independent mannose-6-phosphate receptor (Igf2r) from Mus musculus (Mouse).